The chain runs to 190 residues: Adenylate kinase (190 aa).

12-17 (GSGKTT) is an ATP binding site. The segment at 34–63 (STGELLRAEVASGSERGKIIEGFTSKGNLV) is NMP. Residues threonine 35, arginine 40, 61-63 (NLV), 88-91 (GYPR), and glutamine 95 contribute to the AMP site. The LID stretch occupies residues 130–136 (GRARGAD). Arginine 131 contacts ATP. AMP-binding residues include arginine 133 and arginine 145. Residue arginine 173 coordinates ATP.

The protein belongs to the adenylate kinase family. Monomer.

Its subcellular location is the cytoplasm. It carries out the reaction AMP + ATP = 2 ADP. The protein operates within purine metabolism; AMP biosynthesis via salvage pathway; AMP from ADP: step 1/1. In terms of biological role, catalyzes the reversible transfer of the terminal phosphate group between ATP and AMP. Plays an important role in cellular energy homeostasis and in adenine nucleotide metabolism. This is Adenylate kinase from Wolinella succinogenes (strain ATCC 29543 / DSM 1740 / CCUG 13145 / JCM 31913 / LMG 7466 / NCTC 11488 / FDC 602W) (Vibrio succinogenes).